The following is a 297-amino-acid chain: Probable lipid kinase YegS-like (297 aa).

The DAGKc domain maps to 2 to 131 (STFPASLLIL…IDIARVNDKT (130 aa)). ATP contacts are provided by residues Thr40, 66-72 (GDGTINE), and Thr93. Residues Leu213, Asp216, and Leu218 each contribute to the Mg(2+) site. Glu269 serves as the catalytic Proton acceptor.

This sequence belongs to the diacylglycerol/lipid kinase family. YegS lipid kinase subfamily. It depends on Mg(2+) as a cofactor. Requires Ca(2+) as cofactor.

The protein resides in the cytoplasm. Functionally, probably phosphorylates lipids; the in vivo substrate is unknown. The sequence is that of Probable lipid kinase YegS-like from Klebsiella pneumoniae (strain 342).